A 538-amino-acid polypeptide reads, in one-letter code: Putative cysteine ligase BshC (538 aa).

The stretch at 419 to 445 forms a coiled coil; that stretch reads IEAKRQIQAMEQLLAEKYSELASYLEE.

It belongs to the BshC family.

Its function is as follows. Involved in bacillithiol (BSH) biosynthesis. May catalyze the last step of the pathway, the addition of cysteine to glucosamine malate (GlcN-Mal) to generate BSH. The polypeptide is Putative cysteine ligase BshC (Lysinibacillus sphaericus (strain C3-41)).